A 505-amino-acid polypeptide reads, in one-letter code: Acetyl-coenzyme A carboxylase carboxyl transferase subunit beta, chloroplastic (505 aa).

Positions 189-205 (ESVSNSKSGSSSIRTGG) are enriched in low complexity. The tract at residues 189–213 (ESVSNSKSGSSSIRTGGNSSDFNRR) is disordered. The CoA carboxyltransferase N-terminal domain occupies 228-499 (LWVQCENCYG…NQNSSRALGS (272 aa)). 4 residues coordinate Zn(2+): Cys-232, Cys-235, Cys-251, and Cys-254. Residues 232–254 (CENCYGLNYKKFVSFKMHICEQC) form a C4-type zinc finger.

It belongs to the AccD/PCCB family. As to quaternary structure, acetyl-CoA carboxylase is a heterohexamer composed of biotin carboxyl carrier protein, biotin carboxylase and 2 subunits each of ACCase subunit alpha and ACCase plastid-coded subunit beta (accD). Requires Zn(2+) as cofactor.

The protein localises to the plastid. It is found in the chloroplast stroma. The catalysed reaction is N(6)-carboxybiotinyl-L-lysyl-[protein] + acetyl-CoA = N(6)-biotinyl-L-lysyl-[protein] + malonyl-CoA. It functions in the pathway lipid metabolism; malonyl-CoA biosynthesis; malonyl-CoA from acetyl-CoA: step 1/1. Component of the acetyl coenzyme A carboxylase (ACC) complex. Biotin carboxylase (BC) catalyzes the carboxylation of biotin on its carrier protein (BCCP) and then the CO(2) group is transferred by the transcarboxylase to acetyl-CoA to form malonyl-CoA. The polypeptide is Acetyl-coenzyme A carboxylase carboxyl transferase subunit beta, chloroplastic (Calycanthus floridus var. glaucus (Eastern sweetshrub)).